The following is a 577-amino-acid chain: Aspartate--tRNA ligase (577 aa).

E169 serves as a coordination point for L-aspartate. The tract at residues 193–196 (QLYK) is aspartate. An L-aspartate-binding site is contributed by R215. ATP contacts are provided by residues 215 to 217 (RDE) and Q224. H440 lines the L-aspartate pocket. E474 is an ATP binding site. R481 contributes to the L-aspartate binding site. 526–529 (GIDR) contributes to the ATP binding site.

The protein belongs to the class-II aminoacyl-tRNA synthetase family. Type 1 subfamily. As to quaternary structure, homodimer.

The protein localises to the cytoplasm. It carries out the reaction tRNA(Asp) + L-aspartate + ATP = L-aspartyl-tRNA(Asp) + AMP + diphosphate. Catalyzes the attachment of L-aspartate to tRNA(Asp) in a two-step reaction: L-aspartate is first activated by ATP to form Asp-AMP and then transferred to the acceptor end of tRNA(Asp). This chain is Aspartate--tRNA ligase, found in Mesoplasma florum (strain ATCC 33453 / NBRC 100688 / NCTC 11704 / L1) (Acholeplasma florum).